Consider the following 296-residue polypeptide: MNSNYPLFWIKEILTNGFVENILYIFIIMAFLTGIYSIIANLIKFVINYINIKITKIITLIENWLKKSDSSFVYFILLLYLLLNIHISLNFVLYFRIVILGFISIKNMEISTLISFIDYISEIIANIIDRNTLKMGGTDSDSNPLSHVYEFASKSSKPKEVEKAIPNLPENVPKYPGKIVKPVPNNLLEKRGLSSMSVEMPSNTTNPSDIERLNNLLEDIKKSLELYDNQSLKFRKHISEVNNNDPNCVYDPRSKELFKDYIKLVDLLKDQQKDMGNKIINELKNIDPNIKHKYFK.

The protein localises to the mitochondrion. This is an uncharacterized protein from Podospora anserina (strain S / ATCC MYA-4624 / DSM 980 / FGSC 10383) (Pleurage anserina).